A 112-amino-acid chain; its full sequence is MSKLKAQSALQKLIESQKNPNANEDGYFRRKRLAKKERPFEPKKLVQQQQRLKEKKKNENIIYLKKTMRVTPSEEKIHEMINQKRETKKRKRKQKKKNDDDYGVFEEDMLEL.

Disordered stretches follow at residues 1–53 and 80–112; these read MSKL…QRLK and MINQKRETKKRKRKQKKKNDDDYGVFEEDMLEL. The span at 8–22 shows a compositional bias: polar residues; the sequence is SALQKLIESQKNPNA. Positions 86–96 are enriched in basic residues; that stretch reads ETKKRKRKQKK. Residues 101–112 show a composition bias toward acidic residues; the sequence is DYGVFEEDMLEL.

Its subcellular location is the nucleus. The protein resides in the nucleolus. This is an uncharacterized protein from Schizosaccharomyces pombe (strain 972 / ATCC 24843) (Fission yeast).